Reading from the N-terminus, the 350-residue chain is MQVSDFHFELPDELIARYPQPERTASRLLQLNGNSGELNDGQFTDILDLVQAGDLLVFNNTRVIPARMFGMKASGGKLEVLVERVLDEHSVLAHVRCSKSPKPGTMLLLGENQEHEAEMVARHDTLFEIRFTSDKKVLDILDEIGHMPLPPYIDRPDEDADKERYQTVYNKKPGAVAAPTAGLHFDTEILEKMKAKGVEFAYVTLHVGAGTFQPVRVDNILEHHMHSEYAEVSQEVIDAINATKARGGRVVSVGTTSVRSLESAAQHALKQGTELAPFFDDTEIFIYPGYEFQVVDALVTNFHLPESTLIMLVSAFAGYENTMKAYEQAVNNKYRFFSYGDAMFITKKTA.

The protein belongs to the QueA family. As to quaternary structure, monomer.

It is found in the cytoplasm. It catalyses the reaction 7-aminomethyl-7-carbaguanosine(34) in tRNA + S-adenosyl-L-methionine = epoxyqueuosine(34) in tRNA + adenine + L-methionine + 2 H(+). Its pathway is tRNA modification; tRNA-queuosine biosynthesis. In terms of biological role, transfers and isomerizes the ribose moiety from AdoMet to the 7-aminomethyl group of 7-deazaguanine (preQ1-tRNA) to give epoxyqueuosine (oQ-tRNA). This is S-adenosylmethionine:tRNA ribosyltransferase-isomerase from Aliivibrio fischeri (strain ATCC 700601 / ES114) (Vibrio fischeri).